The sequence spans 231 residues: Flagellar L-ring protein (231 aa).

The N-terminal stretch at 1-18 is a signal peptide; the sequence is MNRLLSLFALGGAVLLAG. Cys-19 is lipidated: N-palmitoyl cysteine. The S-diacylglycerol cysteine moiety is linked to residue Cys-19.

It belongs to the FlgH family. As to quaternary structure, the basal body constitutes a major portion of the flagellar organelle and consists of four rings (L,P,S, and M) mounted on a central rod.

It is found in the cell outer membrane. It localises to the bacterial flagellum basal body. Functionally, assembles around the rod to form the L-ring and probably protects the motor/basal body from shearing forces during rotation. The sequence is that of Flagellar L-ring protein from Pseudomonas putida (strain W619).